Here is a 62-residue protein sequence, read N- to C-terminus: Toxin Ct28 (62 aa).

A signal peptide spans 1–22 (MKAFYGILIILLFCSMFKLNES). Intrachain disulfides connect Cys29–Cys51, Cys35–Cys56, and Cys39–Cys58. Residue Asn61 is modified to Asparagine amide.

It belongs to the short scorpion toxin superfamily. Potassium channel inhibitor family. Alpha-KTx 02 subfamily. Expressed by the venom gland.

It is found in the secreted. Blocks voltage-gated potassium channels. This is Toxin Ct28 from Centruroides tecomanus (Scorpion).